We begin with the raw amino-acid sequence, 282 residues long: Stress response regulator protein 1 (282 aa).

Composition is skewed to low complexity over residues 12–30 (NLSR…HSST) and 41–58 (SLDT…SNNN). Disordered regions lie at residues 12-31 (NLSR…SSTV), 41-84 (SLDT…DDED), and 112-139 (LTPF…TTVV). The segment covering 66–77 (SDYNSYTHNQYY) has biased composition (polar residues). Residues 125 to 139 (SIISSKSSNKSTTVV) are compositionally biased toward low complexity. Residues 155 to 273 (SFLIVDDNII…LDFMANSIDD (119 aa)) form the Response regulatory domain. Asp206 bears the 4-aspartylphosphate mark.

Its function is as follows. Required for stress adaptation, morphogenesis and virulence. This Candida albicans (strain WO-1) (Yeast) protein is Stress response regulator protein 1 (SRR1).